Consider the following 355-residue polypeptide: Ubiquinone biosynthesis protein COQ4 homolog, mitochondrial (355 aa).

4 residues coordinate Zn(2+): H134, D135, H138, and E150.

Belongs to the COQ4 family. In terms of assembly, component of a multi-subunit COQ enzyme complex. It depends on Zn(2+) as a cofactor.

The protein resides in the mitochondrion inner membrane. The catalysed reaction is a 4-hydroxy-3-methoxy-5-(all-trans-polyprenyl)benzoate + H(+) = a 2-methoxy-6-(all-trans-polyprenyl)phenol + CO2. It participates in cofactor biosynthesis; ubiquinone biosynthesis. Lyase that catalyzes the C1-decarboxylation of 4-hydroxy-3-methoxy-5-(all-trans-polyprenyl)benzoic acid into 2-methoxy-6-(all-trans-polyprenyl)phenol during ubiquinone biosynthesis. The polypeptide is Ubiquinone biosynthesis protein COQ4 homolog, mitochondrial (Plasmodium falciparum (isolate 3D7)).